The following is an 88-amino-acid chain: DNA-directed RNA polymerase subunit omega (88 aa).

The protein belongs to the RNA polymerase subunit omega family. In terms of assembly, the RNAP catalytic core consists of 2 alpha, 1 beta, 1 beta' and 1 omega subunit. When a sigma factor is associated with the core the holoenzyme is formed, which can initiate transcription.

The enzyme catalyses RNA(n) + a ribonucleoside 5'-triphosphate = RNA(n+1) + diphosphate. Functionally, promotes RNA polymerase assembly. Latches the N- and C-terminal regions of the beta' subunit thereby facilitating its interaction with the beta and alpha subunits. In Pseudomonas aeruginosa (strain LESB58), this protein is DNA-directed RNA polymerase subunit omega.